The sequence spans 283 residues: Acetylglutamate kinase (283 aa).

Residues 64–65 (GG), Arg86, and Asn181 each bind substrate.

It belongs to the acetylglutamate kinase family. ArgB subfamily.

It localises to the cytoplasm. It carries out the reaction N-acetyl-L-glutamate + ATP = N-acetyl-L-glutamyl 5-phosphate + ADP. The protein operates within amino-acid biosynthesis; L-arginine biosynthesis; N(2)-acetyl-L-ornithine from L-glutamate: step 2/4. Its function is as follows. Catalyzes the ATP-dependent phosphorylation of N-acetyl-L-glutamate. The polypeptide is Acetylglutamate kinase (Sulfurimonas denitrificans (strain ATCC 33889 / DSM 1251) (Thiomicrospira denitrificans (strain ATCC 33889 / DSM 1251))).